Here is a 302-residue protein sequence, read N- to C-terminus: 4-diphosphocytidyl-2-C-methyl-D-erythritol kinase (302 aa).

Residue lysine 32 is part of the active site. Residue 115–125 (PMGGGVGGGSS) participates in ATP binding. Aspartate 157 is a catalytic residue.

Belongs to the GHMP kinase family. IspE subfamily.

The catalysed reaction is 4-CDP-2-C-methyl-D-erythritol + ATP = 4-CDP-2-C-methyl-D-erythritol 2-phosphate + ADP + H(+). Its pathway is isoprenoid biosynthesis; isopentenyl diphosphate biosynthesis via DXP pathway; isopentenyl diphosphate from 1-deoxy-D-xylulose 5-phosphate: step 3/6. Catalyzes the phosphorylation of the position 2 hydroxy group of 4-diphosphocytidyl-2C-methyl-D-erythritol. The polypeptide is 4-diphosphocytidyl-2-C-methyl-D-erythritol kinase (Actinobacillus succinogenes (strain ATCC 55618 / DSM 22257 / CCUG 43843 / 130Z)).